The chain runs to 227 residues: Paired immunoglobulin-like type 2 receptor beta (227 aa).

A signal peptide spans 1 to 19; sequence MGRPLLLPLLLLLQPPAFL. Over 20–191 the chain is Extracellular; that stretch reads QPGGSTGSGP…WHLSLDTAIR (172 aa). Positions 21 to 143 constitute an Ig-like V-type domain; sequence PGGSTGSGPS…SGRQQLQSIK (123 aa). A glycan (N-linked (GlcNAc...) asparagine) is linked at Asn-100. A helical membrane pass occupies residues 192 to 212; the sequence is VALAVAVLKTVILGLLCLLLL. At 213 to 227 the chain is on the cytoplasmic side; sequence WWRRRKGSRAPSSDF.

Its subcellular location is the membrane. Functionally, paired receptors consist of highly related activating and inhibitory receptors and are widely involved in the regulation of the immune system. PILRB is thought to act as a cellular signaling activating receptor that associates with ITAM-bearing adapter molecules on the cell surface. This Homo sapiens (Human) protein is Paired immunoglobulin-like type 2 receptor beta (PILRB).